The following is a 534-amino-acid chain: CTP synthase (534 aa).

Residues 1–265 (MKYIIVTGGV…TTQLMKHLQL (265 aa)) form an amidoligase domain region. Residue Ser-12 participates in CTP binding. Position 12 (Ser-12) interacts with UTP. 13–18 (GLGKGI) provides a ligand contact to ATP. Position 53 (Tyr-53) interacts with L-glutamine. Asp-70 lines the ATP pocket. The Mg(2+) site is built by Asp-70 and Glu-140. CTP-binding positions include 147-149 (DIE), 186-191 (KTKPSQ), and Lys-222. UTP-binding positions include 186–191 (KTKPSQ) and Lys-222. The Glutamine amidotransferase type-1 domain maps to 289-530 (KLAIVGKYTN…VAAMCKYRKE (242 aa)). Gly-352 serves as a coordination point for L-glutamine. Catalysis depends on Cys-379, which acts as the Nucleophile; for glutamine hydrolysis. L-glutamine contacts are provided by residues 380-383 (LGMQ), Glu-403, and Arg-460. Active-site residues include His-503 and Glu-505.

The protein belongs to the CTP synthase family. As to quaternary structure, homotetramer.

It carries out the reaction UTP + L-glutamine + ATP + H2O = CTP + L-glutamate + ADP + phosphate + 2 H(+). It catalyses the reaction L-glutamine + H2O = L-glutamate + NH4(+). The enzyme catalyses UTP + NH4(+) + ATP = CTP + ADP + phosphate + 2 H(+). The protein operates within pyrimidine metabolism; CTP biosynthesis via de novo pathway; CTP from UDP: step 2/2. Its activity is regulated as follows. Allosterically activated by GTP, when glutamine is the substrate; GTP has no effect on the reaction when ammonia is the substrate. The allosteric effector GTP functions by stabilizing the protein conformation that binds the tetrahedral intermediate(s) formed during glutamine hydrolysis. Inhibited by the product CTP, via allosteric rather than competitive inhibition. Its function is as follows. Catalyzes the ATP-dependent amination of UTP to CTP with either L-glutamine or ammonia as the source of nitrogen. Regulates intracellular CTP levels through interactions with the four ribonucleotide triphosphates. This is CTP synthase from Methanosarcina barkeri (strain Fusaro / DSM 804).